We begin with the raw amino-acid sequence, 414 residues long: Tyrosine--tRNA ligase (414 aa).

Tyr40 is an L-tyrosine binding site. A 'HIGH' region motif is present at residues 45 to 54 (ATAASLHVGH). 2 residues coordinate L-tyrosine: Tyr175 and Gln179. The 'KMSKS' region motif lies at 235–239 (KMGKS). ATP is bound at residue Lys238. In terms of domain architecture, S4 RNA-binding spans 349–414 (LTVVQLLAQT…KKKHRMVQLG (66 aa)).

This sequence belongs to the class-I aminoacyl-tRNA synthetase family. TyrS type 1 subfamily. In terms of assembly, homodimer.

The protein resides in the cytoplasm. It carries out the reaction tRNA(Tyr) + L-tyrosine + ATP = L-tyrosyl-tRNA(Tyr) + AMP + diphosphate + H(+). In terms of biological role, catalyzes the attachment of tyrosine to tRNA(Tyr) in a two-step reaction: tyrosine is first activated by ATP to form Tyr-AMP and then transferred to the acceptor end of tRNA(Tyr). This chain is Tyrosine--tRNA ligase, found in Paracoccus denitrificans (strain Pd 1222).